Here is a 208-residue protein sequence, read N- to C-terminus: Uracil phosphoribosyltransferase (208 aa).

5-phospho-alpha-D-ribose 1-diphosphate-binding positions include Arg-78, Arg-103, and 130–138 (DPMLATGGS). Residues Ile-193 and 198–200 (GDA) each bind uracil. Asp-199 serves as a coordination point for 5-phospho-alpha-D-ribose 1-diphosphate.

It belongs to the UPRTase family. The cofactor is Mg(2+).

It catalyses the reaction UMP + diphosphate = 5-phospho-alpha-D-ribose 1-diphosphate + uracil. It participates in pyrimidine metabolism; UMP biosynthesis via salvage pathway; UMP from uracil: step 1/1. With respect to regulation, allosterically activated by GTP. Its function is as follows. Catalyzes the conversion of uracil and 5-phospho-alpha-D-ribose 1-diphosphate (PRPP) to UMP and diphosphate. This is Uracil phosphoribosyltransferase from Neisseria meningitidis serogroup A / serotype 4A (strain DSM 15465 / Z2491).